The sequence spans 857 residues: Autoinducer 2 sensor kinase/phosphatase LuxQ (857 aa).

2 helical membrane-spanning segments follow: residues 14 to 34 and 283 to 303; these read IASFITHAVVVVMGVLIVSVL and FWMAFALISMIGVSIASRWWL. Residues 486–706 form the Histidine kinase domain; sequence KMSHELRTPL…RFEIQLPIEL (221 aa). The residue at position 489 (histidine 489) is a Phosphohistidine; by autocatalysis. Positions 731–846 constitute a Response regulatory domain; it reads RVLLVEDNHT…TLHKALEHFK (116 aa). A 4-aspartylphosphate modification is found at aspartate 780.

Binds the complex formed by AI-2 and LuxP.

The protein resides in the cell inner membrane. It carries out the reaction ATP + protein L-histidine = ADP + protein N-phospho-L-histidine.. Functionally, at low cell density, in absence of AI-2 (autoinducer 2), LuxQ has a kinase activity and autophosphorylates on a histidine residue. The phosphoryl group is then transferred to an aspartate residue in the response regulator domain. The phosphoryl group is transferred to LuxU, and ultimately to LuxO. At high cell density, in the presence of AI-2, the kinase activity is inactivated, and the response regulator domain has a phosphatase activity. The chain is Autoinducer 2 sensor kinase/phosphatase LuxQ (luxQ) from Vibrio cholerae serotype O1 (strain ATCC 39315 / El Tor Inaba N16961).